Reading from the N-terminus, the 168-residue chain is Thioredoxin Y, chloroplastic (168 aa).

The N-terminal 58 residues, 1–58 (MAAFTSTTTAAAASPTPCRPAALVARSSAAPLRSAAPVVVAAGLRRAAAPSRRGATLR), are a transit peptide targeting the chloroplast. The Thioredoxin domain maps to 59–165 (VQAKKQTFSS…LIQQIESALE (107 aa)). Active-site nucleophile residues include Cys89 and Cys92. Cys89 and Cys92 are disulfide-bonded.

The protein belongs to the thioredoxin family. Plant Y-type subfamily.

The protein localises to the plastid. It is found in the chloroplast. Functionally, probable thiol-disulfide oxidoreductase that may participate in various redox reactions. The sequence is that of Thioredoxin Y, chloroplastic from Oryza sativa subsp. japonica (Rice).